We begin with the raw amino-acid sequence, 363 residues long: Spermidine/putrescine import ATP-binding protein PotA (363 aa).

The ABC transporter domain occupies 6–236; that stretch reads LEIRNVTRRF…PRSRFVADFI (231 aa). 38-45 contributes to the ATP binding site; it reads GPSGCGKT.

It belongs to the ABC transporter superfamily. Spermidine/putrescine importer (TC 3.A.1.11.1) family. The complex is composed of two ATP-binding proteins (PotA), two transmembrane proteins (PotB and PotC) and a solute-binding protein (PotD).

Its subcellular location is the cell inner membrane. It carries out the reaction ATP + H2O + polyamine-[polyamine-binding protein]Side 1 = ADP + phosphate + polyamineSide 2 + [polyamine-binding protein]Side 1.. Part of the ABC transporter complex PotABCD involved in spermidine/putrescine import. Responsible for energy coupling to the transport system. This Pseudomonas aeruginosa (strain UCBPP-PA14) protein is Spermidine/putrescine import ATP-binding protein PotA.